The sequence spans 226 residues: Enolase-phosphatase E1 (226 aa).

Belongs to the HAD-like hydrolase superfamily. MasA/MtnC family. In terms of assembly, monomer. Mg(2+) is required as a cofactor.

The catalysed reaction is 5-methylsulfanyl-2,3-dioxopentyl phosphate + H2O = 1,2-dihydroxy-5-(methylsulfanyl)pent-1-en-3-one + phosphate. It functions in the pathway amino-acid biosynthesis; L-methionine biosynthesis via salvage pathway; L-methionine from S-methyl-5-thio-alpha-D-ribose 1-phosphate: step 3/6. It participates in amino-acid biosynthesis; L-methionine biosynthesis via salvage pathway; L-methionine from S-methyl-5-thio-alpha-D-ribose 1-phosphate: step 4/6. In terms of biological role, bifunctional enzyme that catalyzes the enolization of 2,3-diketo-5-methylthiopentyl-1-phosphate (DK-MTP-1-P) into the intermediate 2-hydroxy-3-keto-5-methylthiopentenyl-1-phosphate (HK-MTPenyl-1-P), which is then dephosphorylated to form the acireductone 1,2-dihydroxy-3-keto-5-methylthiopentene (DHK-MTPene). This Shewanella pealeana (strain ATCC 700345 / ANG-SQ1) protein is Enolase-phosphatase E1.